A 509-amino-acid polypeptide reads, in one-letter code: ATP synthase subunit beta, mitochondrial (509 aa).

A mitochondrion-targeting transit peptide spans 1–32; it reads MVLPRLIPRLSRSAFKVAQANNRVFNAPFRGM. Residue 189-196 coordinates ATP; that stretch reads GAGVGKTV.

As to quaternary structure, F-type ATP synthases have 2 components, the catalytic core F(1) and the membrane-embedded component F(0), linked together by a central stalk and a peripheral stalk. The central stalk, also called rotor shaft, is often seen as part of F(1). The peripheral stalk is seen as part of F(0). F(0) contains the membrane channel next to the rotor. F-type ATP synthases form dimers but each monomer functions independently in ATP generation. The dimer consists of 17 different polypeptides: ATP1 (subunit alpha, 3 molecules per monomer, part of F(1)), ATP2 (subunit beta, 3 copies per monomer, part of F(1)), ATP3 (subunit gamma, part of the central stalk), ATP4 (subunit b, part of the peripheral stalk), ATP5/OSCP (subunit 5/OSCP, part of the peripheral stalk), ATP6 (subunit a, part of the peripheral stalk), ATP7 (subunit d, part of the peripheral stalk), ATP8 (subunit 8, part of the peripheral stalk), OLI1 (subunit c, part of the rotor, 10 molecules per monomer), ATP14 (subunit h, part of the peripheral stalk), ATP15 (subunit epsilon, part of the central stalk), ATP16 (subunit delta, part of the central stalk), ATP17 (subunit f, part of the peripheral stalk), ATP18 (subunit i/j, part of the peripheral stalk), ATP19 (subunit k, dimer-specific, at interface between monomers), ATP20 (subunit g, at interface between monomers), TIM11 (subunit e, at interface between monomers).

The protein resides in the mitochondrion inner membrane. The enzyme catalyses ATP + H2O + 4 H(+)(in) = ADP + phosphate + 5 H(+)(out). Functionally, mitochondrial membrane ATP synthase (F(1)F(0) ATP synthase or Complex V) produces ATP from ADP in the presence of a proton gradient across the membrane which is generated by electron transport complexes of the respiratory chain. F-type ATP synthases consist of two structural domains, F(1) - containing the extramembraneous catalytic core, and F(0) - containing the membrane proton channel, linked together by a central stalk and a peripheral stalk. During catalysis, ATP synthesis in the catalytic domain of F(1) is coupled via a rotary mechanism of the central stalk subunits to proton translocation. Subunits alpha/ATP1 and beta/ATP2 form the catalytic core in F(1). Rotation of the central stalk against the surrounding alpha/ATP1(3)beta/ATP2(3) subunits leads to hydrolysis of ATP in three separate catalytic sites on the beta/ATP2 subunits. The sequence is that of ATP synthase subunit beta, mitochondrial from Yarrowia lipolytica (strain CLIB 122 / E 150) (Yeast).